A 452-amino-acid chain; its full sequence is UDP-glycosyltransferase 76D1 (452 aa).

UDP-alpha-D-glucose-binding positions include S269, 329-331 (APQ), 346-354 (HGGWNSCLE), and 368-371 (SGDQ).

This sequence belongs to the UDP-glycosyltransferase family.

Functionally, possesses low quercetin 7-O-glucosyltransferase activity in vitro. This chain is UDP-glycosyltransferase 76D1 (UGT76D1), found in Arabidopsis thaliana (Mouse-ear cress).